A 38-amino-acid polypeptide reads, in one-letter code: Large ribosomal subunit protein bL36 (38 aa).

It belongs to the bacterial ribosomal protein bL36 family.

This Azotobacter vinelandii (strain DJ / ATCC BAA-1303) protein is Large ribosomal subunit protein bL36.